A 129-amino-acid chain; its full sequence is uncharacterized protein (129 aa).

This is an uncharacterized protein from Homo sapiens (Human).